Here is a 130-residue protein sequence, read N- to C-terminus: Small ribosomal subunit protein bS6 (130 aa).

Residues 100-130 (SPMVKAKDERRERHDFASEANDDSEAGDSEE) are disordered. Basic and acidic residues predominate over residues 104–116 (KAKDERRERHDFA). The span at 119 to 130 (ANDDSEAGDSEE) shows a compositional bias: acidic residues.

Belongs to the bacterial ribosomal protein bS6 family.

In terms of biological role, binds together with bS18 to 16S ribosomal RNA. This chain is Small ribosomal subunit protein bS6, found in Yersinia pestis (strain Pestoides F).